The chain runs to 172 residues: Signal peptidase complex catalytic subunit SEC11 (172 aa).

At 1–14 the chain is on the cytoplasmic side; that stretch reads MLSGLQNPRQAAAQ. A helical; Signal-anchor for type II membrane protein transmembrane segment spans residues 15 to 35; that stretch reads LMNFALILSTAFMMWKGLSVA. At 36–172 the chain is on the lumenal side; that stretch reads TDSPSPIVVV…MGLLVVIQRE (137 aa). Catalysis depends on charge relay system residues serine 49, histidine 90, and aspartate 115. The interval 158–169 is C-terminal short (CTS) helix; it reads VMLGIMGLLVVI.

This sequence belongs to the peptidase S26B family. Component of the signal peptidase complex (SPC) composed of a catalytic subunit SEC11 and three accessory subunits SPC1, SPC2 and SPC3. The complex induces a local thinning of the ER membrane which is used to measure the length of the signal peptide (SP) h-region of protein substrates. This ensures the selectivity of the complex towards h-regions shorter than 18-20 amino acids. SPC associates with the translocon complex.

The protein localises to the endoplasmic reticulum membrane. The catalysed reaction is Cleavage of hydrophobic, N-terminal signal or leader sequences from secreted and periplasmic proteins.. Catalytic component of the signal peptidase complex (SPC) which catalyzes the cleavage of N-terminal signal sequences from nascent proteins as they are translocated into the lumen of the endoplasmic reticulum. Specifically cleaves N-terminal signal peptides that contain a hydrophobic alpha-helix (h-region) shorter than 18-20 amino acids. This is Signal peptidase complex catalytic subunit SEC11 (SEC11) from Metarhizium acridum (strain CQMa 102).